Here is a 124-residue protein sequence, read N- to C-terminus: Fluoride-specific ion channel FluC (124 aa).

Transmembrane regions (helical) follow at residues 4 to 24 (YLVIAVGGSIGAILRYLTGVY), 36 to 56 (GTLIVNVVGSFILSFFMILFL), 63 to 83 (PLWRLFVAVGFCGSYTTLSSI), and 100 to 120 (LLNIALNFGLSFLSAFAGIVL). Residues Gly-75 and Thr-78 each contribute to the Na(+) site.

Belongs to the fluoride channel Fluc/FEX (TC 1.A.43) family.

The protein localises to the cell inner membrane. The catalysed reaction is fluoride(in) = fluoride(out). Na(+) is not transported, but it plays an essential structural role and its presence is essential for fluoride channel function. Fluoride-specific ion channel. Important for reducing fluoride concentration in the cell, thus reducing its toxicity. The polypeptide is Fluoride-specific ion channel FluC (Sulfurihydrogenibium sp. (strain YO3AOP1)).